The sequence spans 3078 residues: Homeobox-like protein HDP1 (3078 aa).

10 disordered regions span residues 1 to 29, 59 to 164, 203 to 306, 949 to 980, 1323 to 1390, 1415 to 1445, 1939 to 2046, 2115 to 2216, 2599 to 2637, and 2959 to 3019; these read MKRG…DNSN, LHNS…INDN, SKRK…NIGK, NAEI…QDEN, DEDS…KDRK, SSSN…NNKN, KVND…QDKF, TNES…QYNY, AYMN…DDNI, and QQNN…NNGP. Residues 14-29 show a composition bias toward polar residues; that stretch reads CPSNGMASSQRNDNSN. A compositionally biased stretch (basic and acidic residues) spans 59–84; that stretch reads LHNSSSRESKDMKLSEEPRHINEKCI. Low complexity-rich tracts occupy residues 85-94 and 114-127; these read NDNNKINNNN and NNNN…TKNN. Composition is skewed to polar residues over residues 128-137, 148-157, 209-229, 237-252, and 949-960; these read IFFQTNNPDT, KQENTSSSLH, NSNN…NNIT, TSSI…NTVH, and NAEIHESNSPNH. Residues 1368–1380 show a composition bias toward basic residues; it reads RKNKINRGSKGKH. Positions 1415-1433 are enriched in low complexity; it reads SSSNYEEGNSSSNEENNIS. Polar residues predominate over residues 1434–1445; that stretch reads TDKNISNTNNKN. Residues 1939 to 1993 are compositionally biased toward low complexity; sequence KVNDSNNSNDANEGNNANYSNDSSNTNNNTSSSTNNSNNNTSCSSQNTTTSSENN. Basic and acidic residues-rich tracts occupy residues 2012–2021 and 2029–2046; these read KDTQKEKNNL and YEDR…QDKF. Over residues 2115 to 2126 the composition is skewed to polar residues; sequence TNESIKTNSDQN. Over residues 2139-2160 the composition is skewed to low complexity; the sequence is MNNDNYNSSYDNVHNDNDNNMV. Over residues 2163–2177 the composition is skewed to basic and acidic residues; that stretch reads DSSRQDNMEKQKSGE. Acidic residues predominate over residues 2192–2201; that stretch reads NDNDNDDNND. Composition is skewed to low complexity over residues 2202-2216, 2602-2630, and 2959-2989; these read NDNN…QYNY, NDNN…YSYD, and QQNN…QKNN. Over residues 2990-3006 the composition is skewed to polar residues; it reads LSEVQVSNINTPSSYNI. The interval 2991–3078 is DNA-binding; the sequence is SEVQVSNINT…GKRRKNEDNK (88 aa).

As to quaternary structure, homodimer.

Its subcellular location is the nucleus. It is found in the chromosome. Functionally, transcriptional regulator which binds to the DNA motifs 5'-GTGCACAC-3' (motif A) and 5'-[GTA]TGTA[CT][GA]TAC-3' (motif B) of genes essential for early gametocyte development, including those critical for the expansion of the inner membrane complex (IMC). The polypeptide is Homeobox-like protein HDP1 (Plasmodium falciparum (isolate NF54)).